The sequence spans 428 residues: UPF0229 protein YeaH (428 aa).

Positions 77–90 (PGNDHFIQNDRIER) are enriched in basic and acidic residues. Positions 77-111 (PGNDHFIQNDRIERPQSGGGGGSGSGQGQASQDGE) are disordered. A compositionally biased stretch (gly residues) spans 93-103 (SGGGGGSGSGQ).

The protein belongs to the UPF0229 family.

In Salmonella typhi, this protein is UPF0229 protein YeaH.